The sequence spans 308 residues: Oxygen-dependent coproporphyrinogen-III oxidase (308 aa).

Position 100 (serine 100) interacts with substrate. A divalent metal cation-binding residues include histidine 104 and histidine 114. The Proton donor role is filled by histidine 114. A substrate-binding site is contributed by 116 to 118; that stretch reads NFR. Histidine 153 and histidine 183 together coordinate a divalent metal cation. An important for dimerization region spans residues 248–283; sequence YVEFNLVFDRGTIFGLQSGGRTESILSSMPPMATWK. Residue 266-268 coordinates substrate; it reads GGR.

This sequence belongs to the aerobic coproporphyrinogen-III oxidase family. In terms of assembly, homodimer. A divalent metal cation serves as cofactor.

The protein resides in the cytoplasm. The catalysed reaction is coproporphyrinogen III + O2 + 2 H(+) = protoporphyrinogen IX + 2 CO2 + 2 H2O. The protein operates within porphyrin-containing compound metabolism; protoporphyrin-IX biosynthesis; protoporphyrinogen-IX from coproporphyrinogen-III (O2 route): step 1/1. In terms of biological role, involved in the heme biosynthesis. Catalyzes the aerobic oxidative decarboxylation of propionate groups of rings A and B of coproporphyrinogen-III to yield the vinyl groups in protoporphyrinogen-IX. The sequence is that of Oxygen-dependent coproporphyrinogen-III oxidase from Francisella philomiragia subsp. philomiragia (strain ATCC 25017 / CCUG 19701 / FSC 153 / O#319-036).